Consider the following 389-residue polypeptide: Succinate--CoA ligase [ADP-forming] subunit beta (389 aa).

One can recognise an ATP-grasp domain in the interval 9-244 (KQLFEHYGLP…LTQNDAREAE (236 aa)). Residues Lys46, 53–55 (GRG), Glu99, Cys102, and Glu107 contribute to the ATP site. Residues Asn199 and Asp213 each coordinate Mg(2+). Substrate-binding positions include Asn264 and 321-323 (GIV).

This sequence belongs to the succinate/malate CoA ligase beta subunit family. As to quaternary structure, heterotetramer of two alpha and two beta subunits. The cofactor is Mg(2+).

It catalyses the reaction succinate + ATP + CoA = succinyl-CoA + ADP + phosphate. The catalysed reaction is GTP + succinate + CoA = succinyl-CoA + GDP + phosphate. It functions in the pathway carbohydrate metabolism; tricarboxylic acid cycle; succinate from succinyl-CoA (ligase route): step 1/1. Its function is as follows. Succinyl-CoA synthetase functions in the citric acid cycle (TCA), coupling the hydrolysis of succinyl-CoA to the synthesis of either ATP or GTP and thus represents the only step of substrate-level phosphorylation in the TCA. The beta subunit provides nucleotide specificity of the enzyme and binds the substrate succinate, while the binding sites for coenzyme A and phosphate are found in the alpha subunit. The protein is Succinate--CoA ligase [ADP-forming] subunit beta of Haemophilus influenzae (strain ATCC 51907 / DSM 11121 / KW20 / Rd).